The primary structure comprises 439 residues: Methylenetetrahydrofolate--tRNA-(uracil-5-)-methyltransferase TrmFO (439 aa).

8-13 (GAGLAG) lines the FAD pocket.

It belongs to the MnmG family. TrmFO subfamily. FAD is required as a cofactor.

The protein localises to the cytoplasm. It carries out the reaction uridine(54) in tRNA + (6R)-5,10-methylene-5,6,7,8-tetrahydrofolate + NADH + H(+) = 5-methyluridine(54) in tRNA + (6S)-5,6,7,8-tetrahydrofolate + NAD(+). The catalysed reaction is uridine(54) in tRNA + (6R)-5,10-methylene-5,6,7,8-tetrahydrofolate + NADPH + H(+) = 5-methyluridine(54) in tRNA + (6S)-5,6,7,8-tetrahydrofolate + NADP(+). Catalyzes the folate-dependent formation of 5-methyl-uridine at position 54 (M-5-U54) in all tRNAs. This is Methylenetetrahydrofolate--tRNA-(uracil-5-)-methyltransferase TrmFO from Lacticaseibacillus paracasei (strain ATCC 334 / BCRC 17002 / CCUG 31169 / CIP 107868 / KCTC 3260 / NRRL B-441) (Lactobacillus paracasei).